The sequence spans 447 residues: Oxysterols receptor LXR-alpha (447 aa).

2 disordered regions span residues 1 to 37 (MSLW…GGSS) and 65 to 88 (ALLT…KKGP). The interval 1–96 (MSLWLGAPVP…GPAPKMLGNE (96 aa)) is transactivation AF-1; required for ligand-independent transactivation function. Positions 24 to 37 (GAQDASSQAQGGSS) are enriched in low complexity. Residues 95-170 (NELCSVCGDK…AGMREECVLS (76 aa)) constitute a DNA-binding region (nuclear receptor). 2 NR C4-type zinc fingers span residues 98–118 (CSVC…CEGC) and 134–158 (CHSG…LRKC). Residues 180–202 (KRQEEEQAHATSLPPRASSPPQI) are disordered. A transactivation AF-2; required for ligand-dependent transactivation function; mediates interaction with CCAR2 region spans residues 205–447 (QLSPEQLGMI…LLSEIWDVHE (243 aa)). Residues 209–447 (EQLGMIEKLV…LLSEIWDVHE (239 aa)) form the NR LBD domain.

It belongs to the nuclear hormone receptor family. NR1 subfamily. In terms of assembly, heterodimer of NR1H3 and RXR (retinoic acid receptor). Interacts with CCAR2 (via N-terminus) in a ligand-independent manner. Interacts with SIRT1 and this interaction is inhibited by CCAR2. Interacts with GPS2. Post-translationally, ubiquitinated by UBR5, leading to its degradation: UBR5 specifically recognizes and binds ligand-bound NR1H3 when it is not associated with coactivators (NCOAs). In presence of NCOAs, the UBR5-degron is not accessible, preventing its ubiquitination and degradation. Visceral organs specific expression. Strong expression was found in liver, kidney and intestine followed by spleen and to a lesser extent the adrenals.

The protein resides in the nucleus. The protein localises to the cytoplasm. In terms of biological role, nuclear receptor that exhibits a ligand-dependent transcriptional activation activity. Interaction with retinoic acid receptor (RXR) shifts RXR from its role as a silent DNA-binding partner to an active ligand-binding subunit in mediating retinoid responses through target genes defined by LXRES. LXRES are DR4-type response elements characterized by direct repeats of two similar hexanuclotide half-sites spaced by four nucleotides. Plays an important role in the regulation of cholesterol homeostasis, regulating cholesterol uptake through MYLIP-dependent ubiquitination of LDLR, VLDLR and LRP8. Interplays functionally with RORA for the regulation of genes involved in liver metabolism. Induces LPCAT3-dependent phospholipid remodeling in endoplasmic reticulum (ER) membranes of hepatocytes, driving SREBF1 processing and lipogenesis. Via LPCAT3, triggers the incorporation of arachidonate into phosphatidylcholines of ER membranes, increasing membrane dynamics and enabling triacylglycerols transfer to nascent very low-density lipoprotein (VLDL) particles. Via LPCAT3 also counteracts lipid-induced ER stress response and inflammation, likely by modulating SRC kinase membrane compartmentalization and limiting the synthesis of lipid inflammatory mediators. The sequence is that of Oxysterols receptor LXR-alpha (NR1H3) from Homo sapiens (Human).